Here is a 257-residue protein sequence, read N- to C-terminus: MLVVISPAKTLDFNKINETLPMTNPKFLKEARVLVEELKNYDSYSLGKLMKTSDKLSLLNKNRFDIWNESFDNSRQCLIAFKGEVFKGIDVGSFNVEDLFYTNDHLRILSGLYGALNPFDGVNPYRLEMGTKLSFNNYKNLYDYWGDKLKYKIIEDIKSTGDNMLVNLASYEYFKSIEGIDLIDTSVNIVTPIFKEYRNGEYKIVTMKAKKARGLMVSFIMKNKINNIEDLKKFDLEGYLYNEDLSNNNELVFTLEN.

The protein belongs to the UPF0246 family.

This chain is UPF0246 protein CLH_2088, found in Clostridium botulinum (strain Alaska E43 / Type E3).